The sequence spans 112 residues: Putative iron-sulfur cluster insertion protein ErpA (112 aa).

Iron-sulfur cluster-binding residues include Cys40, Cys104, and Cys106.

Belongs to the HesB/IscA family. Homodimer. The cofactor is iron-sulfur cluster.

Functionally, required for insertion of 4Fe-4S clusters. The chain is Putative iron-sulfur cluster insertion protein ErpA from Neisseria gonorrhoeae (strain ATCC 700825 / FA 1090).